The chain runs to 306 residues: Ribonuclease Z (306 aa).

Zn(2+)-binding residues include H63, H65, D67, H68, H141, D208, and H266. D67 functions as the Proton acceptor in the catalytic mechanism.

It belongs to the RNase Z family. As to quaternary structure, homodimer. Zn(2+) is required as a cofactor.

The enzyme catalyses Endonucleolytic cleavage of RNA, removing extra 3' nucleotides from tRNA precursor, generating 3' termini of tRNAs. A 3'-hydroxy group is left at the tRNA terminus and a 5'-phosphoryl group is left at the trailer molecule.. Functionally, zinc phosphodiesterase, which displays some tRNA 3'-processing endonuclease activity. Probably involved in tRNA maturation, by removing a 3'-trailer from precursor tRNA. The chain is Ribonuclease Z from Chlamydia caviae (strain ATCC VR-813 / DSM 19441 / 03DC25 / GPIC) (Chlamydophila caviae).